A 329-amino-acid polypeptide reads, in one-letter code: UDP-glucose 4-epimerase (329 aa).

NAD(+)-binding positions include 13–14 (YV), 33–38 (HNLSTG), 53–54 (DI), 76–80 (FAAFS), Asn95, Thr120, Tyr144, Lys148, and Phe172. Substrate contacts are provided by Thr120 and Tyr144. Tyr144 serves as the catalytic Proton acceptor. Substrate-binding positions include Asn173, 190–191 (HL), 207–209 (SVY), Arg221, and 281–284 (RGRD).

It belongs to the NAD(P)-dependent epimerase/dehydratase family. In terms of assembly, homodimer. NAD(+) serves as cofactor.

The enzyme catalyses UDP-alpha-D-glucose = UDP-alpha-D-galactose. Its pathway is carbohydrate metabolism; galactose metabolism. Functionally, involved in the metabolism of galactose. Catalyzes the conversion of UDP-galactose (UDP-Gal) to UDP-glucose (UDP-Glc) through a mechanism involving the transient reduction of NAD. This is UDP-glucose 4-epimerase (galE) from Streptomyces lividans.